The following is a 223-amino-acid chain: 23 kDa piroplasm membrane protein (223 aa).

The first 19 residues, 1–19 (MHKFTKVFFVAILVHTLKS), serve as a signal peptide directing secretion. Residues 20 to 197 (GLVFTPVSGT…EEEKSDKKKY (178 aa)) are Extracellular-facing. N-linked (GlcNAc...) asparagine glycosylation is present at Asn69. The helical transmembrane segment at 198-218 (VLMVVVVVVFVVVASLVVFLV) threads the bilayer. Topologically, residues 219–223 (KFCLK) are cytoplasmic.

The protein localises to the membrane. The protein is 23 kDa piroplasm membrane protein of Theileria buffeli.